We begin with the raw amino-acid sequence, 445 residues long: UNC93-like protein MFSD11 (445 aa).

A helical transmembrane segment spans residues 8–28 (LLNIVILGVGFMFMFTAFQTS). N-linked (GlcNAc...) asparagine glycosylation occurs at Asn40. Transmembrane regions (helical) follow at residues 52–72 (LAII…VIAV), 74–94 (GCQM…AMFI), 98–118 (TWSF…LWTA), and 138–158 (IFWA…YLAW). Residue Asn163 is glycosylated (N-linked (GlcNAc...) asparagine). A run of 7 helical transmembrane segments spans residues 170–190 (RTVF…FFLI), 239–259 (MLLL…YSGV), 277–297 (LIGL…GLFG), 309–329 (PVVI…YLYM), 343–363 (LSAF…LLGL), 385–405 (APAF…AFFY), and 415–435 (LLIL…VEWG).

It belongs to the unc-93 family.

It localises to the membrane. In Xenopus laevis (African clawed frog), this protein is UNC93-like protein MFSD11 (mfsd11).